The sequence spans 213 residues: Ribosomal RNA large subunit methyltransferase E (213 aa).

Residues glycine 68, tryptophan 70, aspartate 88, aspartate 104, and aspartate 127 each contribute to the S-adenosyl-L-methionine site. The active-site Proton acceptor is the lysine 167.

The protein belongs to the class I-like SAM-binding methyltransferase superfamily. RNA methyltransferase RlmE family.

The protein localises to the cytoplasm. The enzyme catalyses uridine(2552) in 23S rRNA + S-adenosyl-L-methionine = 2'-O-methyluridine(2552) in 23S rRNA + S-adenosyl-L-homocysteine + H(+). Specifically methylates the uridine in position 2552 of 23S rRNA at the 2'-O position of the ribose in the fully assembled 50S ribosomal subunit. In Neorickettsia sennetsu (strain ATCC VR-367 / Miyayama) (Ehrlichia sennetsu), this protein is Ribosomal RNA large subunit methyltransferase E.